A 725-amino-acid chain; its full sequence is Eukaryotic translation initiation factor 3 subunit B (725 aa).

The residue at position 23 (serine 23) is a Phosphoserine. One can recognise an RRM domain in the interval 39–129; sequence TVVVIEGAPV…HTFVVRKLNQ (91 aa). Serine 135 bears the Phosphoserine mark. Threonine 136 carries the phosphothreonine modification. 3 WD repeats span residues 190–229, 304–344, and 347–386; these read DREN…MCAR, DGKK…LVDK, and IKID…QPAR. Residues 630–671 are a coiled coil; it reads LTKEDMKKIRKKLKDYNRLFDEEDIAEQSSANRELAARRRQL.

This sequence belongs to the eIF-3 subunit B family. As to quaternary structure, component of the eukaryotic translation initiation factor 3 (eIF-3) complex. The eIF-3 complex appears to include tif32/eif3a, SPAC25G10.08/eif3b, tif33/eif3c, SPBC4C3.07/eif3f, tif35/eif3g and sum1/eif3i. This set of common subunits may also associate exclusively with either moe1/eif3d and int6/eif3e, or with SPAC821.05/eif3h and SPAC1751.03/eif3m. The eIF-3 complex may also include SPAC3A12.13c/eif3j.

The protein resides in the cytoplasm. Functionally, RNA-binding component of the eukaryotic translation initiation factor 3 (eIF-3) complex, which is involved in protein synthesis of a specialized repertoire of mRNAs and, together with other initiation factors, stimulates binding of mRNA and methionyl-tRNAi to the 40S ribosome. The eIF-3 complex specifically targets and initiates translation of a subset of mRNAs involved in cell proliferation. The chain is Eukaryotic translation initiation factor 3 subunit B from Schizosaccharomyces pombe (strain 972 / ATCC 24843) (Fission yeast).